Reading from the N-terminus, the 367-residue chain is NADH-quinone oxidoreductase subunit D (367 aa).

The protein belongs to the complex I 49 kDa subunit family. As to quaternary structure, NDH-1 is composed of 14 different subunits. Subunits NuoB, C, D, E, F, and G constitute the peripheral sector of the complex.

Its subcellular location is the cell inner membrane. The enzyme catalyses a quinone + NADH + 5 H(+)(in) = a quinol + NAD(+) + 4 H(+)(out). In terms of biological role, NDH-1 shuttles electrons from NADH, via FMN and iron-sulfur (Fe-S) centers, to quinones in the respiratory chain. The immediate electron acceptor for the enzyme in this species is believed to be ubiquinone. Couples the redox reaction to proton translocation (for every two electrons transferred, four hydrogen ions are translocated across the cytoplasmic membrane), and thus conserves the redox energy in a proton gradient. The chain is NADH-quinone oxidoreductase subunit D from Thermosipho melanesiensis (strain DSM 12029 / CIP 104789 / BI429).